Consider the following 322-residue polypeptide: Eukaryotic translation initiation factor 3 subunit I (322 aa).

WD repeat units lie at residues 4–43, 46–85, 141–180, 184–223, and 281–322; these read GHER…RLGT, GHQG…VIAS, MTES…KVVD, DHTG…CLKT, and GHFG…NIFE.

This sequence belongs to the eIF-3 subunit I family. As to quaternary structure, component of the eukaryotic translation initiation factor 3 (eIF-3) complex. The eIF-3 complex interacts with pix.

The protein resides in the cytoplasm. In terms of biological role, component of the eukaryotic translation initiation factor 3 (eIF-3) complex, which is involved in protein synthesis of a specialized repertoire of mRNAs and, together with other initiation factors, stimulates binding of mRNA and methionyl-tRNAi to the 40S ribosome. The eIF-3 complex specifically targets and initiates translation of a subset of mRNAs involved in cell proliferation. The protein is Eukaryotic translation initiation factor 3 subunit I of Drosophila willistoni (Fruit fly).